The following is a 337-amino-acid chain: Large ribosomal subunit protein uL3 (337 aa).

Positions 1–20 (MASIHRPKRGSLAFSPRKRA) are disordered.

The protein belongs to the universal ribosomal protein uL3 family. Part of the 50S ribosomal subunit. Forms a cluster with proteins L14 and L24e.

Functionally, one of the primary rRNA binding proteins, it binds directly near the 3'-end of the 23S rRNA, where it nucleates assembly of the 50S subunit. In Methanosarcina barkeri (strain Fusaro / DSM 804), this protein is Large ribosomal subunit protein uL3.